The following is a 314-amino-acid chain: 4-hydroxy-3-methylbut-2-enyl diphosphate reductase (314 aa).

Residue Cys-12 participates in [4Fe-4S] cluster binding. (2E)-4-hydroxy-3-methylbut-2-enyl diphosphate contacts are provided by His-41 and His-74. Dimethylallyl diphosphate-binding residues include His-41 and His-74. Residues His-41 and His-74 each coordinate isopentenyl diphosphate. Cys-96 contributes to the [4Fe-4S] cluster binding site. (2E)-4-hydroxy-3-methylbut-2-enyl diphosphate is bound at residue His-124. Residue His-124 participates in dimethylallyl diphosphate binding. Position 124 (His-124) interacts with isopentenyl diphosphate. Glu-126 serves as the catalytic Proton donor. Thr-167 lines the (2E)-4-hydroxy-3-methylbut-2-enyl diphosphate pocket. Cys-197 contributes to the [4Fe-4S] cluster binding site. Ser-225, Ser-226, Asn-227, and Ser-269 together coordinate (2E)-4-hydroxy-3-methylbut-2-enyl diphosphate. The dimethylallyl diphosphate site is built by Ser-225, Ser-226, Asn-227, and Ser-269. The isopentenyl diphosphate site is built by Ser-225, Ser-226, Asn-227, and Ser-269.

The protein belongs to the IspH family. [4Fe-4S] cluster is required as a cofactor.

It carries out the reaction isopentenyl diphosphate + 2 oxidized [2Fe-2S]-[ferredoxin] + H2O = (2E)-4-hydroxy-3-methylbut-2-enyl diphosphate + 2 reduced [2Fe-2S]-[ferredoxin] + 2 H(+). The catalysed reaction is dimethylallyl diphosphate + 2 oxidized [2Fe-2S]-[ferredoxin] + H2O = (2E)-4-hydroxy-3-methylbut-2-enyl diphosphate + 2 reduced [2Fe-2S]-[ferredoxin] + 2 H(+). It functions in the pathway isoprenoid biosynthesis; dimethylallyl diphosphate biosynthesis; dimethylallyl diphosphate from (2E)-4-hydroxy-3-methylbutenyl diphosphate: step 1/1. Its pathway is isoprenoid biosynthesis; isopentenyl diphosphate biosynthesis via DXP pathway; isopentenyl diphosphate from 1-deoxy-D-xylulose 5-phosphate: step 6/6. Functionally, catalyzes the conversion of 1-hydroxy-2-methyl-2-(E)-butenyl 4-diphosphate (HMBPP) into a mixture of isopentenyl diphosphate (IPP) and dimethylallyl diphosphate (DMAPP). Acts in the terminal step of the DOXP/MEP pathway for isoprenoid precursor biosynthesis. The protein is 4-hydroxy-3-methylbut-2-enyl diphosphate reductase of Actinobacillus pleuropneumoniae serotype 7 (strain AP76).